We begin with the raw amino-acid sequence, 83 residues long: Cytochrome b559 subunit alpha (83 aa).

A helical membrane pass occupies residues 21–35 (IIHTITVPMLFLAGW). His23 provides a ligand contact to heme.

The protein belongs to the PsbE/PsbF family. Heterodimer of an alpha subunit and a beta subunit. PSII is composed of 1 copy each of membrane proteins PsbA, PsbB, PsbC, PsbD, PsbE, PsbF, PsbH, PsbI, PsbJ, PsbK, PsbL, PsbM, PsbT, PsbX, PsbY, PsbZ, Psb30/Ycf12, peripheral proteins PsbO, CyanoQ (PsbQ), PsbU, PsbV and a large number of cofactors. It forms dimeric complexes. Heme b is required as a cofactor.

It is found in the cellular thylakoid membrane. In terms of biological role, this b-type cytochrome is tightly associated with the reaction center of photosystem II (PSII). PSII is a light-driven water:plastoquinone oxidoreductase that uses light energy to abstract electrons from H(2)O, generating O(2) and a proton gradient subsequently used for ATP formation. It consists of a core antenna complex that captures photons, and an electron transfer chain that converts photonic excitation into a charge separation. This Acaryochloris marina (strain MBIC 11017) protein is Cytochrome b559 subunit alpha.